The primary structure comprises 117 residues: Ribosome-binding factor A (117 aa).

This sequence belongs to the RbfA family. In terms of assembly, monomer. Binds 30S ribosomal subunits, but not 50S ribosomal subunits or 70S ribosomes.

The protein localises to the cytoplasm. One of several proteins that assist in the late maturation steps of the functional core of the 30S ribosomal subunit. Associates with free 30S ribosomal subunits (but not with 30S subunits that are part of 70S ribosomes or polysomes). Required for efficient processing of 16S rRNA. May interact with the 5'-terminal helix region of 16S rRNA. This Leptospira interrogans serogroup Icterohaemorrhagiae serovar copenhageni (strain Fiocruz L1-130) protein is Ribosome-binding factor A.